The chain runs to 109 residues: Large ribosomal subunit protein uL22 (109 aa).

Belongs to the universal ribosomal protein uL22 family. In terms of assembly, part of the 50S ribosomal subunit.

In terms of biological role, this protein binds specifically to 23S rRNA; its binding is stimulated by other ribosomal proteins, e.g. L4, L17, and L20. It is important during the early stages of 50S assembly. It makes multiple contacts with different domains of the 23S rRNA in the assembled 50S subunit and ribosome. The globular domain of the protein is located near the polypeptide exit tunnel on the outside of the subunit, while an extended beta-hairpin is found that lines the wall of the exit tunnel in the center of the 70S ribosome. This chain is Large ribosomal subunit protein uL22, found in Bordetella avium (strain 197N).